The following is a 320-amino-acid chain: o-succinylbenzoate synthase (320 aa).

Lysine 133 functions as the Proton donor in the catalytic mechanism. Aspartate 161, glutamate 190, and aspartate 213 together coordinate Mg(2+). Lysine 235 functions as the Proton acceptor in the catalytic mechanism.

It belongs to the mandelate racemase/muconate lactonizing enzyme family. MenC type 1 subfamily. The cofactor is a divalent metal cation.

The enzyme catalyses (1R,6R)-6-hydroxy-2-succinyl-cyclohexa-2,4-diene-1-carboxylate = 2-succinylbenzoate + H2O. The protein operates within quinol/quinone metabolism; 1,4-dihydroxy-2-naphthoate biosynthesis; 1,4-dihydroxy-2-naphthoate from chorismate: step 4/7. Its pathway is quinol/quinone metabolism; menaquinone biosynthesis. Its function is as follows. Converts 2-succinyl-6-hydroxy-2,4-cyclohexadiene-1-carboxylate (SHCHC) to 2-succinylbenzoate (OSB). In Shigella flexneri, this protein is o-succinylbenzoate synthase.